The chain runs to 157 residues: SsrA-binding protein (157 aa).

The interval 130 to 157 (KAEHDKRDTIKEREGKREVERVMKSRHR) is disordered.

It belongs to the SmpB family.

The protein resides in the cytoplasm. In terms of biological role, required for rescue of stalled ribosomes mediated by trans-translation. Binds to transfer-messenger RNA (tmRNA), required for stable association of tmRNA with ribosomes. tmRNA and SmpB together mimic tRNA shape, replacing the anticodon stem-loop with SmpB. tmRNA is encoded by the ssrA gene; the 2 termini fold to resemble tRNA(Ala) and it encodes a 'tag peptide', a short internal open reading frame. During trans-translation Ala-aminoacylated tmRNA acts like a tRNA, entering the A-site of stalled ribosomes, displacing the stalled mRNA. The ribosome then switches to translate the ORF on the tmRNA; the nascent peptide is terminated with the 'tag peptide' encoded by the tmRNA and targeted for degradation. The ribosome is freed to recommence translation, which seems to be the essential function of trans-translation. In Acidovorax sp. (strain JS42), this protein is SsrA-binding protein.